The sequence spans 130 residues: Succinate dehydrogenase assembly factor 3, mitochondrial (130 aa).

The transit peptide at Met-1 to Leu-8 directs the protein to the mitochondrion.

This sequence belongs to the complex I LYR family. SDHAF3 subfamily. In terms of assembly, interacts with the iron-sulfur protein subunit within the SDH catalytic dimer.

Its subcellular location is the mitochondrion matrix. Functionally, plays an essential role in the assembly of succinate dehydrogenase (SDH), an enzyme complex (also referred to as respiratory complex II) that is a component of both the tricarboxylic acid (TCA) cycle and the mitochondrial electron transport chain, and which couples the oxidation of succinate to fumarate with the reduction of ubiquinone (coenzyme Q) to ubiquinol. Promotes maturation of the iron-sulfur protein subunit of the SDH catalytic dimer, protecting it from the deleterious effects of oxidants. May act together with SDHAF1. The sequence is that of Succinate dehydrogenase assembly factor 3, mitochondrial from Gibberella zeae (strain ATCC MYA-4620 / CBS 123657 / FGSC 9075 / NRRL 31084 / PH-1) (Wheat head blight fungus).